Consider the following 483-residue polypeptide: UDP-N-acetylmuramoyl-L-alanyl-D-glutamate--L-lysine ligase (483 aa).

Residue Ser44 participates in UDP-N-acetyl-alpha-D-muramoyl-L-alanyl-D-glutamate binding. An ATP-binding site is contributed by 120 to 126; sequence GTKGKTT. UDP-N-acetyl-alpha-D-muramoyl-L-alanyl-D-glutamate contacts are provided by residues 162-163, Ser189, and Arg197; that span reads TT. N6-carboxylysine is present on Lys231. The short motif at 406–409 is the L-lysine recognition motif element; it reads DDPN.

This sequence belongs to the MurCDEF family. MurE subfamily. In terms of processing, carboxylation is probably crucial for Mg(2+) binding and, consequently, for the gamma-phosphate positioning of ATP.

The protein resides in the cytoplasm. The catalysed reaction is UDP-N-acetyl-alpha-D-muramoyl-L-alanyl-D-glutamate + L-lysine + ATP = UDP-N-acetyl-alpha-D-muramoyl-L-alanyl-gamma-D-glutamyl-L-lysine + ADP + phosphate + H(+). Its pathway is cell wall biogenesis; peptidoglycan biosynthesis. In terms of biological role, catalyzes the addition of L-lysine to the nucleotide precursor UDP-N-acetylmuramoyl-L-alanyl-D-glutamate (UMAG) in the biosynthesis of bacterial cell-wall peptidoglycan. The sequence is that of UDP-N-acetylmuramoyl-L-alanyl-D-glutamate--L-lysine ligase from Streptococcus mutans serotype c (strain ATCC 700610 / UA159).